Reading from the N-terminus, the 425-residue chain is Serine--tRNA ligase (425 aa).

231-233 is an L-serine binding site; it reads TAE. Position 262–264 (262–264) interacts with ATP; it reads RSE. E285 contributes to the L-serine binding site. 349–352 serves as a coordination point for ATP; it reads EISS. Position 385 (S385) interacts with L-serine.

It belongs to the class-II aminoacyl-tRNA synthetase family. Type-1 seryl-tRNA synthetase subfamily. In terms of assembly, homodimer. The tRNA molecule binds across the dimer.

It localises to the cytoplasm. It catalyses the reaction tRNA(Ser) + L-serine + ATP = L-seryl-tRNA(Ser) + AMP + diphosphate + H(+). It carries out the reaction tRNA(Sec) + L-serine + ATP = L-seryl-tRNA(Sec) + AMP + diphosphate + H(+). The protein operates within aminoacyl-tRNA biosynthesis; selenocysteinyl-tRNA(Sec) biosynthesis; L-seryl-tRNA(Sec) from L-serine and tRNA(Sec): step 1/1. Functionally, catalyzes the attachment of serine to tRNA(Ser). Is also able to aminoacylate tRNA(Sec) with serine, to form the misacylated tRNA L-seryl-tRNA(Sec), which will be further converted into selenocysteinyl-tRNA(Sec). The sequence is that of Serine--tRNA ligase from Bacillus licheniformis (strain ATCC 14580 / DSM 13 / JCM 2505 / CCUG 7422 / NBRC 12200 / NCIMB 9375 / NCTC 10341 / NRRL NRS-1264 / Gibson 46).